A 472-amino-acid polypeptide reads, in one-letter code: ATP synthase subunit beta (472 aa).

Glycine 149 to threonine 156 provides a ligand contact to ATP.

The protein belongs to the ATPase alpha/beta chains family. In terms of assembly, F-type ATPases have 2 components, CF(1) - the catalytic core - and CF(0) - the membrane proton channel. CF(1) has five subunits: alpha(3), beta(3), gamma(1), delta(1), epsilon(1). CF(0) has three main subunits: a(1), b(2) and c(9-12). The alpha and beta chains form an alternating ring which encloses part of the gamma chain. CF(1) is attached to CF(0) by a central stalk formed by the gamma and epsilon chains, while a peripheral stalk is formed by the delta and b chains.

It localises to the cell inner membrane. The catalysed reaction is ATP + H2O + 4 H(+)(in) = ADP + phosphate + 5 H(+)(out). In terms of biological role, produces ATP from ADP in the presence of a proton gradient across the membrane. The catalytic sites are hosted primarily by the beta subunits. The chain is ATP synthase subunit beta from Pelagibacter ubique (strain HTCC1062).